Here is a 477-residue protein sequence, read N- to C-terminus: Glycogen synthase (477 aa).

Position 15 (Lys-15) interacts with ADP-alpha-D-glucose.

The protein belongs to the glycosyltransferase 1 family. Bacterial/plant glycogen synthase subfamily.

The catalysed reaction is [(1-&gt;4)-alpha-D-glucosyl](n) + ADP-alpha-D-glucose = [(1-&gt;4)-alpha-D-glucosyl](n+1) + ADP + H(+). It participates in glycan biosynthesis; glycogen biosynthesis. Functionally, synthesizes alpha-1,4-glucan chains using ADP-glucose. In Streptococcus pneumoniae serotype 2 (strain D39 / NCTC 7466), this protein is Glycogen synthase.